Consider the following 123-residue polypeptide: Small ribosomal subunit protein uS13 (123 aa).

The interval 97-123 (PVRGQRTHTNAKTRKGRSRLPVAAKKK) is disordered.

This sequence belongs to the universal ribosomal protein uS13 family. As to quaternary structure, part of the 30S ribosomal subunit. Forms a loose heterodimer with protein S19. Forms two bridges to the 50S subunit in the 70S ribosome.

Its function is as follows. Located at the top of the head of the 30S subunit, it contacts several helices of the 16S rRNA. In the 70S ribosome it contacts the 23S rRNA (bridge B1a) and protein L5 of the 50S subunit (bridge B1b), connecting the 2 subunits; these bridges are implicated in subunit movement. Contacts the tRNAs in the A and P-sites. This Ehrlichia ruminantium (strain Gardel) protein is Small ribosomal subunit protein uS13.